The primary structure comprises 293 residues: ATP synthase subunit gamma, mitochondrial (293 aa).

The transit peptide at 1–21 directs the protein to the mitochondrion; it reads MFALRTAARPAARSVGATRNY.

In terms of assembly, F-type ATP synthases have 2 components, the catalytic core F(1) and the membrane-embedded component F(0), linked together by a central stalk and a peripheral stalk. The central stalk, also called rotor shaft, is often seen as part of F(1). The peripheral stalk is seen as part of F(0). F(0) contains the membrane channel next to the rotor. F-type ATP synthases form dimers but each monomer functions independently in ATP generation. The dimer consists of 17 different polypeptides: ATP1 (subunit alpha, 3 molecules per monomer, part of F(1)), ATP2 (subunit beta, 3 copies per monomer, part of F(1)), ATP3 (subunit gamma, part of the central stalk), ATP4 (subunit b, part of the peripheral stalk), ATP5/OSCP (subunit 5/OSCP, part of the peripheral stalk), ATP6 (subunit a, part of the peripheral stalk), ATP7 (subunit d, part of the peripheral stalk), ATP8 (subunit 8, part of the peripheral stalk), OLI1 (subunit c, part of the rotor, 10 molecules per monomer), ATP14 (subunit h, part of the peripheral stalk), ATP15 (subunit epsilon, part of the central stalk), ATP16 (subunit delta, part of the central stalk), ATP17 (subunit f, part of the peripheral stalk), ATP18 (subunit i/j, part of the peripheral stalk), ATP19 (subunit k, dimer-specific, at interface between monomers), ATP20 (subunit g, at interface between monomers), TIM11 (subunit e, at interface between monomers).

The protein localises to the mitochondrion inner membrane. Mitochondrial membrane ATP synthase (F(1)F(0) ATP synthase or Complex V) produces ATP from ADP in the presence of a proton gradient across the membrane which is generated by electron transport complexes of the respiratory chain. F-type ATP synthases consist of two structural domains, F(1) - containing the extramembraneous catalytic core, and F(0) - containing the membrane proton channel, linked together by a central stalk and a peripheral stalk. During catalysis, ATP synthesis in the catalytic domain of F(1) is coupled via a rotary mechanism of the central stalk subunits to proton translocation. Part of the complex F(1) domain and the central stalk which is part of the complex rotary element. The gamma/ATP3 subunit protrudes into the catalytic domain formed of alpha/ATP1(3)beta/ATP2(3). Rotation of the central stalk against the surrounding alpha/ATP1(3)beta/ATP2(3) subunits leads to hydrolysis of ATP in three separate catalytic sites on the beta/ATP2 subunits. The polypeptide is ATP synthase subunit gamma, mitochondrial (Yarrowia lipolytica (strain CLIB 122 / E 150) (Yeast)).